Here is a 196-residue protein sequence, read N- to C-terminus: Deoxyribose-phosphate aldolase (196 aa).

Asp-91 functions as the Proton donor/acceptor in the catalytic mechanism. Lys-153 (schiff-base intermediate with acetaldehyde) is an active-site residue. The active-site Proton donor/acceptor is Lys-182.

This sequence belongs to the DeoC/FbaB aldolase family. DeoC type 1 subfamily.

The protein localises to the cytoplasm. The catalysed reaction is 2-deoxy-D-ribose 5-phosphate = D-glyceraldehyde 3-phosphate + acetaldehyde. It functions in the pathway carbohydrate degradation; 2-deoxy-D-ribose 1-phosphate degradation; D-glyceraldehyde 3-phosphate and acetaldehyde from 2-deoxy-alpha-D-ribose 1-phosphate: step 2/2. In terms of biological role, catalyzes a reversible aldol reaction between acetaldehyde and D-glyceraldehyde 3-phosphate to generate 2-deoxy-D-ribose 5-phosphate. The sequence is that of Deoxyribose-phosphate aldolase from Mycoplasma mycoides subsp. mycoides SC (strain CCUG 32753 / NCTC 10114 / PG1).